Reading from the N-terminus, the 66-residue chain is Large ribosomal subunit protein uL29 (66 aa).

The protein belongs to the universal ribosomal protein uL29 family.

This Borrelia turicatae (strain 91E135) protein is Large ribosomal subunit protein uL29.